Here is a 147-residue protein sequence, read N- to C-terminus: Large ribosomal subunit protein uL15 (147 aa).

Residues 1–20 (MTLRLNDLKPADGARTERTR) show a composition bias toward basic and acidic residues. A disordered region spans residues 1 to 61 (MTLRLNDLKP…GFEGGQTPMQ (61 aa)). Residues 23–33 (RGIGSGLGKTA) are compositionally biased toward gly residues. A compositionally biased stretch (basic residues) spans 34–47 (GRGHKGSFARKGGG).

The protein belongs to the universal ribosomal protein uL15 family. Part of the 50S ribosomal subunit.

Functionally, binds to the 23S rRNA. This Xanthomonas axonopodis pv. citri (strain 306) protein is Large ribosomal subunit protein uL15.